We begin with the raw amino-acid sequence, 1107 residues long: Protein translocase subunit SecA (1107 aa).

ATP-binding positions include Gln-169, 187–191 (GEGKT), and Asp-688. Residues 1036 to 1066 (RHAAEQRTDMSKYRTQKDDIEAQQKAQRDAA) show a composition bias toward basic and acidic residues. The disordered stretch occupies residues 1036-1107 (RHAAEQRTDM…KFKQCHGRNL (72 aa)). Positions 1091, 1093, 1102, and 1103 each coordinate Zn(2+). Positions 1097-1107 (KKFKQCHGRNL) are enriched in basic residues.

It belongs to the SecA family. As to quaternary structure, monomer and homodimer. Part of the essential Sec protein translocation apparatus which comprises SecA, SecYEG and auxiliary proteins SecDF. Other proteins may also be involved. It depends on Zn(2+) as a cofactor.

It is found in the cell inner membrane. It localises to the cytoplasm. It catalyses the reaction ATP + H2O + cellular proteinSide 1 = ADP + phosphate + cellular proteinSide 2.. Part of the Sec protein translocase complex. Interacts with the SecYEG preprotein conducting channel. Has a central role in coupling the hydrolysis of ATP to the transfer of proteins into and across the cell membrane, serving as an ATP-driven molecular motor driving the stepwise translocation of polypeptide chains across the membrane. The polypeptide is Protein translocase subunit SecA (Porphyromonas gingivalis (strain ATCC BAA-308 / W83)).